Consider the following 1013-residue polypeptide: Probable ubiquitination network signaling protein acrB (1013 aa).

2 disordered regions span residues 1–65 (MPRS…NSDT) and 104–139 (GQAN…SSAS). A compositionally biased stretch (polar residues) spans 33–64 (NGHLNGNHANSSTPTSGPSSQVDWPSSRSNSD). A run of 3 helical transmembrane segments spans residues 159–179 (IAIL…VQFL), 212–232 (LGTM…FMWT), and 255–275 (SGKN…LHLI). Disordered regions lie at residues 342 to 367 (SMAK…AGSQ), 574 to 599 (SDAE…TTTL), 878 to 906 (QHAS…HFPT), and 954 to 1013 (LSEA…GKGI). Positions 597–806 (TTLKNSIINA…QEYQLRTNQL (210 aa)) form a coiled coil. Over residues 993–1002 (SGSGGSGSGS) the composition is skewed to gly residues. The segment covering 1003-1013 (GSPSSAAGKGI) has biased composition (low complexity).

The protein belongs to the acrB family.

The protein resides in the membrane. Component of the regulatory network controlling carbon source utilization through ubiquitination and deubiquitination involving creA, creB, creC, creD and acrB. Involved in resistance to acriflavine, and required for normal growth on a range of sole carbon sources, including fructose, cellobiose, raffinose, and starch, and reduced utilization of amino acids, including GABA and beta-alanine, as sole carbon and nitrogen sources. This is Probable ubiquitination network signaling protein acrB (acrB) from Aspergillus terreus (strain NIH 2624 / FGSC A1156).